The chain runs to 155 residues: 6,7-dimethyl-8-ribityllumazine synthase (155 aa).

5-amino-6-(D-ribitylamino)uracil-binding positions include Phe23, 57-59 (AFE), and 81-83 (AVI). 86 to 87 (AT) contacts (2S)-2-hydroxy-3-oxobutyl phosphate. His89 (proton donor) is an active-site residue. A 5-amino-6-(D-ribitylamino)uracil-binding site is contributed by Phe114. A (2S)-2-hydroxy-3-oxobutyl phosphate-binding site is contributed by Arg128.

Belongs to the DMRL synthase family.

It catalyses the reaction (2S)-2-hydroxy-3-oxobutyl phosphate + 5-amino-6-(D-ribitylamino)uracil = 6,7-dimethyl-8-(1-D-ribityl)lumazine + phosphate + 2 H2O + H(+). The protein operates within cofactor biosynthesis; riboflavin biosynthesis; riboflavin from 2-hydroxy-3-oxobutyl phosphate and 5-amino-6-(D-ribitylamino)uracil: step 1/2. Functionally, catalyzes the formation of 6,7-dimethyl-8-ribityllumazine by condensation of 5-amino-6-(D-ribitylamino)uracil with 3,4-dihydroxy-2-butanone 4-phosphate. This is the penultimate step in the biosynthesis of riboflavin. In Pelotomaculum thermopropionicum (strain DSM 13744 / JCM 10971 / SI), this protein is 6,7-dimethyl-8-ribityllumazine synthase.